We begin with the raw amino-acid sequence, 514 residues long: Respiratory nitrate reductase 2 beta chain (514 aa).

4Fe-4S ferredoxin-type domains lie at 7–35, 174–205, and 207–236; these read VGMVLNLDKCIGCHTCSVTCKNVWTGREG, TFMMYLPRLCEHCLNPSCVATCPSGAIYKREE, and GIVLIDQDKCRGWRLCISGCPYKKIYFNWK. C16, C19, C22, C26, C183, C186, and C191 together coordinate [4Fe-4S] cluster. The [3Fe-4S] cluster site is built by C195, C216, and C222. [4Fe-4S] cluster-binding residues include C226, C243, C246, C258, and C262.

As to quaternary structure, dimer of heterotrimers each composed of an alpha, a beta and a gamma chain. Alpha and beta are catalytic chains; gamma chains are involved in binding the enzyme complex to the cytoplasmic membrane. The cofactor is [4Fe-4S] cluster. It depends on [3Fe-4S] cluster as a cofactor.

Its subcellular location is the cell membrane. The catalysed reaction is nitrate + a quinol = a quinone + nitrite + H2O. In terms of biological role, this is a second nitrate reductase enzyme which can substitute for the NRA enzyme and allows E.coli to use nitrate as an electron acceptor during anaerobic growth. The beta chain is an electron transfer unit containing four cysteine clusters involved in the formation of iron-sulfur centers. Electrons are transferred from the gamma chain to the molybdenum cofactor of the alpha subunit. The sequence is that of Respiratory nitrate reductase 2 beta chain (narY) from Escherichia coli (strain K12).